We begin with the raw amino-acid sequence, 348 residues long: Dihydroorotase (348 aa).

Zn(2+) is bound by residues His-14 and His-16. Substrate is bound by residues 16–18 and Asn-42; that span reads HLR. Residues Lys-100, His-137, and His-175 each coordinate Zn(2+). Lys-100 is modified (N6-carboxylysine). Residue His-137 coordinates substrate. Leu-220 contacts substrate. Asp-248 serves as a coordination point for Zn(2+). Asp-248 is a catalytic residue. His-252 and Ala-264 together coordinate substrate.

This sequence belongs to the metallo-dependent hydrolases superfamily. DHOase family. Class II DHOase subfamily. Homodimer. The cofactor is Zn(2+).

The enzyme catalyses (S)-dihydroorotate + H2O = N-carbamoyl-L-aspartate + H(+). It participates in pyrimidine metabolism; UMP biosynthesis via de novo pathway; (S)-dihydroorotate from bicarbonate: step 3/3. Catalyzes the reversible cyclization of carbamoyl aspartate to dihydroorotate. The chain is Dihydroorotase from Pseudomonas fluorescens (strain SBW25).